We begin with the raw amino-acid sequence, 171 residues long: Large ribosomal subunit protein uL10 (171 aa).

The protein belongs to the universal ribosomal protein uL10 family. In terms of assembly, part of the ribosomal stalk of the 50S ribosomal subunit. The N-terminus interacts with L11 and the large rRNA to form the base of the stalk. The C-terminus forms an elongated spine to which L12 dimers bind in a sequential fashion forming a multimeric L10(L12)X complex.

Forms part of the ribosomal stalk, playing a central role in the interaction of the ribosome with GTP-bound translation factors. The protein is Large ribosomal subunit protein uL10 of Nitrosomonas eutropha (strain DSM 101675 / C91 / Nm57).